We begin with the raw amino-acid sequence, 201 residues long: 3-isopropylmalate dehydratase small subunit (201 aa).

It belongs to the LeuD family. LeuD type 1 subfamily. Heterodimer of LeuC and LeuD.

It catalyses the reaction (2R,3S)-3-isopropylmalate = (2S)-2-isopropylmalate. It participates in amino-acid biosynthesis; L-leucine biosynthesis; L-leucine from 3-methyl-2-oxobutanoate: step 2/4. Its function is as follows. Catalyzes the isomerization between 2-isopropylmalate and 3-isopropylmalate, via the formation of 2-isopropylmaleate. The sequence is that of 3-isopropylmalate dehydratase small subunit from Erwinia tasmaniensis (strain DSM 17950 / CFBP 7177 / CIP 109463 / NCPPB 4357 / Et1/99).